We begin with the raw amino-acid sequence, 291 residues long: N-acetylmannosamine kinase (291 aa).

Residues 5–12 (AIDIGGTK) and 132–139 (GVGGGVVS) contribute to the ATP site. Residues H156, C166, C168, and C173 each coordinate Zn(2+).

This sequence belongs to the ROK (NagC/XylR) family. NanK subfamily. Homodimer.

It carries out the reaction an N-acyl-D-mannosamine + ATP = an N-acyl-D-mannosamine 6-phosphate + ADP + H(+). It participates in amino-sugar metabolism; N-acetylneuraminate degradation; D-fructose 6-phosphate from N-acetylneuraminate: step 2/5. In terms of biological role, catalyzes the phosphorylation of N-acetylmannosamine (ManNAc) to ManNAc-6-P. The polypeptide is N-acetylmannosamine kinase (Shigella boydii serotype 18 (strain CDC 3083-94 / BS512)).